A 608-amino-acid polypeptide reads, in one-letter code: Nuclear protein localization protein 4 homolog (608 aa).

Ala-2 carries the N-acetylalanine modification. Position 179 is an N6-acetyllysine (Lys-179). One can recognise an MPN domain in the interval 226-363 (IMFENHTVAD…MCRLSPDGHF (138 aa)). Residues 580 to 608 (TAAMWACQHCTFMNQPGTGHCEMCSLPRT) form a RanBP2-type zinc finger.

It belongs to the NPL4 family. In terms of assembly, heterodimer with UFD1. The heterodimer binds ubiquitinated proteins. The heterodimer binds to VCP and inhibits Golgi membrane fusion. Interacts with ZFAND2B; probably through VCP. As to expression, expressed at highest levels in brain, heart, skeletal muscle, kidney and fetal liver.

The protein resides in the cytoplasm. It is found in the cytosol. It localises to the endoplasmic reticulum. The protein localises to the nucleus. It participates in protein degradation; proteasomal ubiquitin-dependent pathway. Functionally, the ternary complex containing UFD1, VCP and NPLOC4 binds ubiquitinated proteins and is necessary for the export of misfolded proteins from the ER to the cytoplasm, where they are degraded by the proteasome. The NPLOC4-UFD1-VCP complex regulates spindle disassembly at the end of mitosis and is necessary for the formation of a closed nuclear envelope. Acts as a negative regulator of type I interferon production via the complex formed with VCP and UFD1, which binds to RIGI and recruits RNF125 to promote ubiquitination and degradation of RIGI. The sequence is that of Nuclear protein localization protein 4 homolog (NPLOC4) from Homo sapiens (Human).